The following is a 476-amino-acid chain: Adenosylhomocysteinase (476 aa).

The substrate site is built by T67, D142, and E202. Position 203–205 (203–205 (TTT)) interacts with NAD(+). Residues K232 and D236 each coordinate substrate. Residues N237, 266–271 (GYGDVG), E289, N324, 345–347 (IGH), and N390 each bind NAD(+).

This sequence belongs to the adenosylhomocysteinase family. NAD(+) is required as a cofactor.

It localises to the cytoplasm. The enzyme catalyses S-adenosyl-L-homocysteine + H2O = L-homocysteine + adenosine. Its pathway is amino-acid biosynthesis; L-homocysteine biosynthesis; L-homocysteine from S-adenosyl-L-homocysteine: step 1/1. May play a key role in the regulation of the intracellular concentration of adenosylhomocysteine. This chain is Adenosylhomocysteinase, found in Prochlorococcus marinus (strain MIT 9303).